The following is a 250-amino-acid chain: Small ribosomal subunit protein uS3 (250 aa).

One can recognise a KH type-2 domain in the interval 39 to 111 (IRQLINNFSK…DINLNILEVK (73 aa)).

It belongs to the universal ribosomal protein uS3 family. Part of the 30S ribosomal subunit. Forms a tight complex with proteins S10 and S14.

Binds the lower part of the 30S subunit head. Binds mRNA in the 70S ribosome, positioning it for translation. The sequence is that of Small ribosomal subunit protein uS3 from Phytoplasma australiense.